The following is a 199-amino-acid chain: ATP-dependent Clp protease proteolytic subunit (199 aa).

The Nucleophile role is filled by Ser97. His122 is a catalytic residue.

The protein belongs to the peptidase S14 family. Fourteen ClpP subunits assemble into 2 heptameric rings which stack back to back to give a disk-like structure with a central cavity, resembling the structure of eukaryotic proteasomes.

The protein resides in the cytoplasm. The enzyme catalyses Hydrolysis of proteins to small peptides in the presence of ATP and magnesium. alpha-casein is the usual test substrate. In the absence of ATP, only oligopeptides shorter than five residues are hydrolyzed (such as succinyl-Leu-Tyr-|-NHMec, and Leu-Tyr-Leu-|-Tyr-Trp, in which cleavage of the -Tyr-|-Leu- and -Tyr-|-Trp bonds also occurs).. Cleaves peptides in various proteins in a process that requires ATP hydrolysis. Has a chymotrypsin-like activity. Plays a major role in the degradation of misfolded proteins. This chain is ATP-dependent Clp protease proteolytic subunit, found in Citrifermentans bemidjiense (strain ATCC BAA-1014 / DSM 16622 / JCM 12645 / Bem) (Geobacter bemidjiensis).